A 150-amino-acid polypeptide reads, in one-letter code: Large ribosomal subunit protein uL13 (150 aa).

This sequence belongs to the universal ribosomal protein uL13 family. In terms of assembly, part of the 50S ribosomal subunit.

Its function is as follows. This protein is one of the early assembly proteins of the 50S ribosomal subunit, although it is not seen to bind rRNA by itself. It is important during the early stages of 50S assembly. The polypeptide is Large ribosomal subunit protein uL13 (Chlorobium phaeobacteroides (strain BS1)).